The primary structure comprises 830 residues: MRHGHPRLLPGLLMLLLLPLGAAAQKTSGCARWCPPKSTCVNATTCRCSPGFSSLSGEIFSSPLESCDDIDECGPPPLVSCGRLADCQNTEGSYHCMCSPGYALASGATTFMNESENTCRDVDECQLKPRVCKSRGICTNTKGSYTCKCPPGFELNLGDLNLCTDVNECTSGQNPCHNSTHCLNNIGGYECRCRPGWKPVPGSPNGPKSTVCEDVDECSSGKHTCHYSTVCINTVGSYKCRCRRGWKPKPRFQDRQLNTTCEVPAEMSFPTWTPPPGIKSQRLSNFFERVQELHRDFKPALAQETIQDLIQEVDELLEIPGDLEALPHSEQHCVATNLLVGLEGVLRNVSQAMPNGPWTFNASAGTDLSLEVQEEGYRNVTLSQNLAKMMLKWDVVHKSGDSGPSVVGLLSTPGMGKLLAEAPLVLEPEKQAVLHGAPKGLLQGVSSVLLSDVISVFMSNKVTQKLSSPVTFIFSHHSATHEPKLKVFCVFWEHSQDECGHWSTRGCTVVDSGDTSTTCQCTHLSSFAVLMAHYDVQEEDLVLPVITYVGLGLSLLCLLLAALTFLLCKAIQNTSTSLHLQLLICLFLAHLLFLMAIDRTEIKVLCSIIAGALHYLYLASFTWMLLEGLHLFLTARNLMVVNYSSVSMLMKKLMYPVGYGVPTLIVAISAASRSHLYGTRTRCWLNPEERFIWSFLGPVCTIFSVNLGFFLMTLWILKSKLSSLNSDVSTLQNTRMLTFKAIAQLFILGCTWCLGILQVGPAAHVMAYLFTIINSLQGVFIFLVYCLLSQQVREEYGKWFKGIRKTRAESEKYTLSSRAMSDVNKPMMVN.

A signal peptide spans 1–22 (MRHGHPRLLPGLLMLLLLPLGA). At 23–540 (AAQKTSGCAR…MAHYDVQEED (518 aa)) the chain is on the extracellular side. One can recognise an EGF-like 1 domain in the interval 26-68 (KTSGCARWCPPKSTCVNATTCRCSPGFSSLSGEIFSSPLESCD). 5 disulfide bridges follow: Cys-30/Cys-40, Cys-34/Cys-46, Cys-48/Cys-67, Cys-73/Cys-87, and Cys-81/Cys-96. N-linked (GlcNAc...) asparagine glycosylation occurs at Asn-42. Residues 69–108 (DIDECGPPPLVSCGRLADCQNTEGSYHCMCSPGYALASGA) form the EGF-like 1; calcium-binding domain. N-linked (GlcNAc...) asparagine glycosylation occurs at Asn-113. An EGF-like 2; calcium-binding domain is found at 121–159 (DVDECQLKPRVCKSRGICTNTKGSYTCKCPPGFELNLGD). 6 disulfide bridges follow: Cys-125-Cys-138, Cys-132-Cys-147, Cys-169-Cys-182, Cys-176-Cys-191, Cys-218-Cys-231, and Cys-225-Cys-240. The region spanning 165–203 (DVNECTSGQNPCHNSTHCLNNIGGYECRCRPGWKPVPGS) is the EGF-like 3; calcium-binding domain. N-linked (GlcNAc...) asparagine glycosylation is present at Asn-178. An EGF-like 4; calcium-binding domain is found at 214 to 253 (DVDECSSGKHTCHYSTVCINTVGSYKCRCRRGWKPKPRFQ). N-linked (GlcNAc...) asparagine glycans are attached at residues Asn-258, Asn-348, Asn-361, and Asn-379. Residues 358 to 537 (WTFNASAGTD…AVLMAHYDVQ (180 aa)) enclose the GAIN-B domain. 2 disulfides stabilise this stretch: Cys-489–Cys-519 and Cys-507–Cys-521. The GPS stretch occupies residues 489–537 (CVFWEHSQDECGHWSTRGCTVVDSGDTSTTCQCTHLSSFAVLMAHYDVQ). A helical transmembrane segment spans residues 541-561 (LVLPVITYVGLGLSLLCLLLA). Topologically, residues 562–576 (ALTFLLCKAIQNTST) are cytoplasmic. A helical transmembrane segment spans residues 577–597 (SLHLQLLICLFLAHLLFLMAI). At 598–603 (DRTEIK) the chain is on the extracellular side. A helical transmembrane segment spans residues 604–624 (VLCSIIAGALHYLYLASFTWM). Residues 625–651 (LLEGLHLFLTARNLMVVNYSSVSMLMK) are Cytoplasmic-facing. A helical transmembrane segment spans residues 652 to 672 (KLMYPVGYGVPTLIVAISAAS). The Extracellular segment spans residues 673–690 (RSHLYGTRTRCWLNPEER). A helical membrane pass occupies residues 691–711 (FIWSFLGPVCTIFSVNLGFFL). At 712–744 (MTLWILKSKLSSLNSDVSTLQNTRMLTFKAIAQ) the chain is on the cytoplasmic side. The chain crosses the membrane as a helical span at residues 745–765 (LFILGCTWCLGILQVGPAAHV). The Extracellular portion of the chain corresponds to 766–767 (MA). The chain crosses the membrane as a helical span at residues 768 to 788 (YLFTIINSLQGVFIFLVYCLL). At 789–830 (SQQVREEYGKWFKGIRKTRAESEKYTLSSRAMSDVNKPMMVN) the chain is on the cytoplasmic side.

This sequence belongs to the G-protein coupled receptor 2 family. Adhesion G-protein coupled receptor (ADGR) subfamily. As to quaternary structure, forms a heterodimer, consisting of a large extracellular region non-covalently linked to a seven-transmembrane moiety. Interacts with chondroitin sulfate; the interaction with chondroitin sulfate is calcium-dependent. Interacts with CD55. Autoproteolytically cleaved into 2 subunits, an extracellular alpha subunit and a seven-transmembrane beta subunit.

Its subcellular location is the cell membrane. It localises to the cell projection. The protein localises to the ruffle membrane. Cell surface receptor that binds to the chondroitin sulfate moiety of glycosaminoglycan chains and promotes cell attachment. Promotes granulocyte chemotaxis, degranulation and adhesion. In macrophages, promotes the release of inflammatory cytokines, including IL8 and TNF. Signals probably through G-proteins. The chain is Adhesion G protein-coupled receptor E2 (ADGRE2) from Canis lupus familiaris (Dog).